The following is a 359-amino-acid chain: WAT1-related protein At4g28040 (359 aa).

The next 10 membrane-spanning stretches (helical) occupy residues 10–30 (LALV…KAAF), 37–57 (TVFV…ISFI), 66–86 (PSLG…GVTV), 103–123 (ACAM…IVGF), 133–153 (SVAK…MTFL), 170–190 (WLLG…WLIL), 204–224 (TSAC…LALG), 240–260 (SCCI…AWIV), 266–286 (VFSA…GALY), and 292–312 (YLGS…VLWG). The region spanning 18–131 (TSAGVALFTK…GFESIKRRSM (114 aa)) is the EamA 1 domain. The EamA 2 domain occupies 199–310 (PDHLYTSACT…AIILGLYIVL (112 aa)).

The protein belongs to the drug/metabolite transporter (DMT) superfamily. Plant drug/metabolite exporter (P-DME) (TC 2.A.7.4) family.

It localises to the membrane. The polypeptide is WAT1-related protein At4g28040 (Arabidopsis thaliana (Mouse-ear cress)).